The primary structure comprises 365 residues: Ribosomal RNA large subunit methyltransferase F (365 aa).

The segment at 1–50 is disordered; the sequence is MSKPAVKSVPSATAKTATRAVNIRQKVKAPKQAKPEAKGRAKPSKDKPRA. Residues 33 to 50 show a composition bias toward basic and acidic residues; that stretch reads AKPEAKGRAKPSKDKPRA.

It belongs to the methyltransferase superfamily. METTL16/RlmF family.

It localises to the cytoplasm. It catalyses the reaction adenosine(1618) in 23S rRNA + S-adenosyl-L-methionine = N(6)-methyladenosine(1618) in 23S rRNA + S-adenosyl-L-homocysteine + H(+). Specifically methylates the adenine in position 1618 of 23S rRNA. This Shewanella baltica (strain OS155 / ATCC BAA-1091) protein is Ribosomal RNA large subunit methyltransferase F.